The sequence spans 137 residues: Glutamyl-tRNA(Gln) amidotransferase subunit C, chloroplastic/mitochondrial (137 aa).

The protein belongs to the GatC family. As to quaternary structure, subunit of the heterotrimeric GatCAB amidotransferase (AdT) complex, composed of A, B and C subunits.

The protein localises to the mitochondrion. The protein resides in the plastid. It is found in the chloroplast. The catalysed reaction is L-glutamyl-tRNA(Gln) + L-glutamine + ATP + H2O = L-glutaminyl-tRNA(Gln) + L-glutamate + ADP + phosphate + H(+). Its function is as follows. Allows the formation of correctly charged Gln-tRNA(Gln) through the transamidation of misacylated Glu-tRNA(Gln) in chloroplasts and mitochondria. The reaction takes place in the presence of glutamine and ATP through an activated gamma-phospho-Glu-tRNA(Gln). The polypeptide is Glutamyl-tRNA(Gln) amidotransferase subunit C, chloroplastic/mitochondrial (Vitis vinifera (Grape)).